A 442-amino-acid polypeptide reads, in one-letter code: 23S rRNA (uracil(1939)-C(5))-methyltransferase RlmD (442 aa).

The TRAM domain maps to 12 to 70 (SKQLSAKVTLEVTKLDHLGAGMAQHQGKIVFIPGALPNEKVTVQLTEQKKRHARAKLLK). The [4Fe-4S] cluster site is built by cysteine 83, cysteine 89, cysteine 92, and cysteine 171. S-adenosyl-L-methionine contacts are provided by glutamine 276, phenylalanine 305, asparagine 310, glutamate 326, aspartate 353, and aspartate 373. Cysteine 399 serves as the catalytic Nucleophile.

The protein belongs to the class I-like SAM-binding methyltransferase superfamily. RNA M5U methyltransferase family. RlmD subfamily.

The catalysed reaction is uridine(1939) in 23S rRNA + S-adenosyl-L-methionine = 5-methyluridine(1939) in 23S rRNA + S-adenosyl-L-homocysteine + H(+). Functionally, catalyzes the formation of 5-methyl-uridine at position 1939 (m5U1939) in 23S rRNA. The chain is 23S rRNA (uracil(1939)-C(5))-methyltransferase RlmD from Shewanella sediminis (strain HAW-EB3).